The chain runs to 716 residues: Dynein axonemal intermediate chain 7 (716 aa).

The protein belongs to the DNAI7 family. As to quaternary structure, part of the multisubunit axonemal dynein complex formed at least of two heavy chains and a number of intermediate and light chains. Interacts with tubulin. Associates with microtubule. In terms of processing, ubiquitinated. Ubiquitination leads to its degradation through the 26S proteasome. Ubiquitin-proteasome-mediated DNAI7 degradation occurs in mitosis.

It is found in the cell projection. The protein localises to the cilium. It localises to the cytoplasm. In terms of biological role, via its association with the multisubunit axonemal dynein complex, is potentially involved in the regulation of cilia function. May also act as a cell cycle regulator. In Homo sapiens (Human), this protein is Dynein axonemal intermediate chain 7.